We begin with the raw amino-acid sequence, 706 residues long: Termination factor NPH-I homolog (706 aa).

Positions 62-227 (IGQGENTRGL…VPCFNMLSGR (166 aa)) constitute a Helicase ATP-binding domain. Residue 75-82 (HQMGMGKT) coordinates ATP. A DEAH box motif is present at residues 168 to 171 (DEAH). Positions 417-599 (QCLQPLKVLE…HLNSAFRDLL (183 aa)) constitute a Helicase C-terminal domain.

It belongs to the DEAD box helicase family. DEAH subfamily. In terms of assembly, part of the viral DNA-directed RNA polymerase that consists of 8 polII-like subunits (RPB1, RPB2, RPB3, RPB5, RPB6, RPB7, RPB9, RPB10), a capping enzyme and a termination factor.

It localises to the virion. In terms of biological role, putative DNA-dependent ATPase required for providing the needed energy to achieve the termination of early transcripts. The polypeptide is Termination factor NPH-I homolog (Ornithodoros (relapsing fever ticks)).